Here is a 390-residue protein sequence, read N- to C-terminus: UPF0229 protein ABC1477 (390 aa).

Disordered regions lie at residues 1 to 31 (MEKD…RHQE) and 81 to 118 (VGQG…QAGE). Residues 7–16 (RQFTISQENW) are compositionally biased toward polar residues. Composition is skewed to basic and acidic residues over residues 22–31 (GFQDQRRHQE) and 86–100 (GDSK…DPNG).

Belongs to the UPF0229 family.

The polypeptide is UPF0229 protein ABC1477 (Shouchella clausii (strain KSM-K16) (Alkalihalobacillus clausii)).